Reading from the N-terminus, the 461-residue chain is Argininosuccinate lyase (461 aa).

The protein belongs to the lyase 1 family. Argininosuccinate lyase subfamily.

It localises to the cytoplasm. The enzyme catalyses 2-(N(omega)-L-arginino)succinate = fumarate + L-arginine. Its pathway is amino-acid biosynthesis; L-arginine biosynthesis; L-arginine from L-ornithine and carbamoyl phosphate: step 3/3. Its activity is regulated as follows. Strongly inhibited by L-arginine. Inhibitory effects are lowered at pH 7.0 compared to those at pH 8.0. At 42 degrees Celsius and pH 8.0, activity decreases to 77% and 25% in the presence of 1 mM and 10 mM arginine, respectively. The other amino and organic acids do not affect activity. In terms of biological role, catalyzes the last step of arginine biosynthesis, the conversion of argininosuccinate into L-arginine and fumarate. The polypeptide is Argininosuccinate lyase (Nostoc sp. (strain PCC 7120 / SAG 25.82 / UTEX 2576)).